Reading from the N-terminus, the 706-residue chain is Probable serine/threonine-protein kinase zyg-1 (706 aa).

Positions 13–249 (YSHLKEIGKG…LTQIVLSEFM (237 aa)) constitute a Protein kinase domain. ATP-binding positions include 19–27 (IGKGGFGVV) and Lys-41. Residue Asp-131 is the Proton acceptor of the active site. 2 stretches are compositionally biased toward basic and acidic residues: residues 261–290 (SREHSRDGRRQRSREPVRSSRDDRSRDGRA) and 323–336 (FDSERGRERDRDSG). Disordered regions lie at residues 261 to 351 (SREH…NRSQ) and 566 to 632 (SPSS…VAPS). The span at 566–579 (SPSSLMPSGSSQTS) shows a compositional bias: low complexity. 2 stretches are compositionally biased toward polar residues: residues 580–592 (RFPFSNLSNNQPS) and 603–629 (KPTSSQRASSANVQRRVSTDENSSPSV).

This sequence belongs to the protein kinase superfamily. Ser/Thr protein kinase family. In terms of assembly, interacts with sel-10. In terms of processing, probably ubiquitinated by the SCF(sel-10) and SCF(lin-23) E3 ubiquitin ligase complexes, leading to its proteasomal degradation.

Its subcellular location is the cytoplasm. It localises to the cytoskeleton. The protein localises to the microtubule organizing center. The protein resides in the centrosome. It is found in the centriole. It catalyses the reaction L-seryl-[protein] + ATP = O-phospho-L-seryl-[protein] + ADP + H(+). The catalysed reaction is L-threonyl-[protein] + ATP = O-phospho-L-threonyl-[protein] + ADP + H(+). Protein kinase that plays a central role in centrosome duplication, control of centrosome size, spindle formation and nuclear envelope breakdown during cell divisions. Paternal copy is required to regulate synthesis of daughter centrioles prior to fertilization. Maternal copy regulates centrosome duplication during later cell cycles. Functions upstream of sas-5 and sas-6, and is required for their localization to the centrosome. Its role in nuclear envelope breakdown is mediated by the spindly-like protein spdl-1 and the RZZ complex, which in turn recruits the spindle checkpoint proteins mdf-1 and mdf-2, dynein and dynactin to unattached kinetochores. This chain is Probable serine/threonine-protein kinase zyg-1, found in Caenorhabditis elegans.